We begin with the raw amino-acid sequence, 119 residues long: Flagellar transcriptional regulator FlhD (119 aa).

The protein belongs to the FlhD family. As to quaternary structure, homodimer; disulfide-linked. Forms a heterohexamer composed of two FlhC and four FlhD subunits. Each FlhC binds a FlhD dimer, forming a heterotrimer, and a hexamer assembles by dimerization of two heterotrimers.

The protein localises to the cytoplasm. In terms of biological role, functions in complex with FlhC as a master transcriptional regulator that regulates transcription of several flagellar and non-flagellar operons by binding to their promoter region. Activates expression of class 2 flagellar genes, including fliA, which is a flagellum-specific sigma factor that turns on the class 3 genes. Also regulates genes whose products function in a variety of physiological pathways. This is Flagellar transcriptional regulator FlhD from Yersinia enterocolitica.